Reading from the N-terminus, the 646-residue chain is DEAD-box ATP-dependent RNA helicase 52 (646 aa).

2 disordered regions span residues 1-64 (MSSN…ANSG) and 76-117 (GSGY…PAVN). Ser2 carries the post-translational modification N-acetylserine. 2 stretches are compositionally biased toward gly residues: residues 54-64 (DRGGYGGANSG) and 76-87 (GSGYGGRGGPVG). The Q motif motif lies at 146–174 (NTFAEIDLGEALNLNIQRCKYVKPTPVQR). The region spanning 177-361 (IPILAAGRDL…SDFLSNYIFL (185 aa)) is the Helicase ATP-binding domain. Position 190-197 (190-197 (AQTGSGKT)) interacts with ATP. Residues 305 to 308 (DEAD) carry the DEAD box motif. The region spanning 388–539 (HLMDLLHAQR…EVPDWLTRYA (152 aa)) is the Helicase C-terminal domain.

It belongs to the DEAD box helicase family. DDX3/DED1 subfamily.

The enzyme catalyses ATP + H2O = ADP + phosphate + H(+). In Arabidopsis thaliana (Mouse-ear cress), this protein is DEAD-box ATP-dependent RNA helicase 52 (RH52).